The sequence spans 215 residues: Vacuolar ATPase assembly integral membrane protein VPH2 (215 aa).

Residues 1–134 (MFEIKLNDRI…SQINKQIKEQ (134 aa)) lie on the Cytoplasmic side of the membrane. Residues 135–155 (VTTVFNVLVSVISVVVAIWYW) traverse the membrane as a helical segment. Topologically, residues 156 to 167 (TGSSTNFPVHVR) are lumenal. Residues 168 to 186 (LLLCLFFGILVLVADVVVY) traverse the membrane as a helical segment. Topologically, residues 187 to 215 (NSYLKKLEEAKVKEKTKVEKKKVLSKITL) are cytoplasmic.

Its subcellular location is the endoplasmic reticulum membrane. Its function is as follows. Required for vacuolar ATPase assembly. The protein is Vacuolar ATPase assembly integral membrane protein VPH2 (VPH2) of Saccharomyces cerevisiae (strain ATCC 204508 / S288c) (Baker's yeast).